Here is a 617-residue protein sequence, read N- to C-terminus: Glutamine--fructose-6-phosphate aminotransferase [isomerizing] (617 aa).

Cys-2 functions as the Nucleophile; for GATase activity in the catalytic mechanism. Positions 2 to 222 (CGIIGLAFAE…DGEFGWISPE (221 aa)) constitute a Glutamine amidotransferase type-2 domain. 2 consecutive SIS domains span residues 293–432 (AAGL…EAGR) and 466–607 (AASL…PDKP). Lys-612 (for Fru-6P isomerization activity) is an active-site residue.

As to quaternary structure, homodimer.

The protein localises to the cytoplasm. It carries out the reaction D-fructose 6-phosphate + L-glutamine = D-glucosamine 6-phosphate + L-glutamate. Its function is as follows. Catalyzes the first step in hexosamine metabolism, converting fructose-6P into glucosamine-6P using glutamine as a nitrogen source. This is Glutamine--fructose-6-phosphate aminotransferase [isomerizing] from Aeropyrum pernix (strain ATCC 700893 / DSM 11879 / JCM 9820 / NBRC 100138 / K1).